The chain runs to 267 residues: Alkaline ceramidase 3 (267 aa).

The Cytoplasmic segment spans residues methionine 1–glutamate 33. The Ca(2+) site is built by aspartate 19, tryptophan 20, glutamate 22, asparagine 24, and glutamate 33. The chain crosses the membrane as a helical span at residues phenylalanine 34–valine 55. Topologically, residues arginine 56 to lysine 61 are lumenal. The helical transmembrane segment at arginine 62–methionine 82 threads the bilayer. Histidine 81 contributes to the Zn(2+) binding site. Residues threonine 83 to glutamate 87 are Cytoplasmic-facing. Residues methionine 88–phenylalanine 108 traverse the membrane as a helical segment. The Lumenal segment spans residues glutamate 109–asparagine 118. A helical membrane pass occupies residues tyrosine 119–valine 139. At lysine 140–glutamate 141 the chain is on the cytoplasmic side. Residues proline 142 to tyrosine 162 form a helical membrane-spanning segment. Residues isoleucine 163–glycine 173 lie on the Lumenal side of the membrane. The helical transmembrane segment at leucine 174–isoleucine 194 threads the bilayer. The Cytoplasmic portion of the chain corresponds to phenylalanine 195–glutamine 215. Residues phenylalanine 216–leucine 236 traverse the membrane as a helical segment. Residues histidine 217 and histidine 221 each contribute to the Zn(2+) site. The Lumenal segment spans residues tyrosine 237–histidine 267.

This sequence belongs to the alkaline ceramidase family. It depends on Zn(2+) as a cofactor. Ubiquitously expressed. Highly expressed in placenta. Expressed in erythrocytes.

The protein resides in the endoplasmic reticulum membrane. It is found in the golgi apparatus membrane. It carries out the reaction an N-acyl-(4R)-4-hydroxysphinganine + H2O = (4R)-hydroxysphinganine + a fatty acid. The catalysed reaction is N-(5Z,8Z,11Z,14Z-eicosatetraenoyl)-sphing-4-enine + H2O = sphing-4-enine + (5Z,8Z,11Z,14Z)-eicosatetraenoate. The enzyme catalyses N-(5Z,8Z,11Z,14Z-eicosatetraenoyl)-sphinganine + H2O = sphinganine + (5Z,8Z,11Z,14Z)-eicosatetraenoate. It catalyses the reaction N-(5Z,8Z,11Z,14Z-eicosatetraenoyl)-(4R)-hydroxysphinganine + H2O = (4R)-hydroxysphinganine + (5Z,8Z,11Z,14Z)-eicosatetraenoate. It carries out the reaction N-(11Z-eicosenoyl)-sphing-4-enine + H2O = (11Z)-eicosenoate + sphing-4-enine. The catalysed reaction is N-(11Z-eicosenoyl)-sphinganine + H2O = (11Z)-eicosenoate + sphinganine. The enzyme catalyses N-(11Z-eicosenoyl)-(4R)-hydroxysphinganine + H2O = (11Z)-eicosenoate + (4R)-hydroxysphinganine. It catalyses the reaction N-(9Z-octadecenoyl)-sphing-4-enine + H2O = sphing-4-enine + (9Z)-octadecenoate. It carries out the reaction N-(9Z-octadecenoyl)-sphinganine + H2O = sphinganine + (9Z)-octadecenoate. The catalysed reaction is N-(9Z-octadecenoyl)-(4R)-hydroxysphinganine + H2O = (4R)-hydroxysphinganine + (9Z)-octadecenoate. The enzyme catalyses an N-acylsphing-4-enine + H2O = sphing-4-enine + a fatty acid. It catalyses the reaction an N-acylsphinganine + H2O = sphinganine + a fatty acid. The protein operates within lipid metabolism; sphingolipid metabolism. Activated by 5 mM Ca(2+) and inhibited by 5 mM Zn(2+). Its function is as follows. Endoplasmic reticulum and Golgi ceramidase that catalyzes the hydrolysis of unsaturated long-chain C18:1-, C20:1- and C20:4-ceramides, dihydroceramides and phytoceramides into sphingoid bases like sphingosine and free fatty acids at alkaline pH. Ceramides, sphingosine, and its phosphorylated form sphingosine-1-phosphate are bioactive lipids that mediate cellular signaling pathways regulating several biological processes including cell proliferation, apoptosis and differentiation. Controls the generation of sphingosine in erythrocytes, and thereby sphingosine-1-phosphate in plasma. Through the regulation of ceramides and sphingosine-1-phosphate homeostasis in the brain may play a role in neurons survival and function. By regulating the levels of pro-inflammatory ceramides in immune cells and tissues, may modulate the inflammatory response. This Homo sapiens (Human) protein is Alkaline ceramidase 3 (ACER3).